The sequence spans 447 residues: GTPase Der (447 aa).

EngA-type G domains follow at residues 4-165 (QIIT…PEEE) and 180-357 (LQIV…KIWN). Residues 10–17 (GRPNVGKS), 57–61 (DTPGL), 119–122 (NKCE), 186–193 (GRPNAGKS), 233–237 (DTAGL), and 298–301 (NKWD) each bind GTP. The KH-like domain occupies 358 to 443 (KKITTSKLNE…PIRFIYVKTK (86 aa)).

The protein belongs to the TRAFAC class TrmE-Era-EngA-EngB-Septin-like GTPase superfamily. EngA (Der) GTPase family. In terms of assembly, associates with the 50S ribosomal subunit.

Its function is as follows. GTPase that plays an essential role in the late steps of ribosome biogenesis. The polypeptide is GTPase Der (Rickettsia peacockii (strain Rustic)).